The following is a 489-amino-acid chain: Protein DETOXIFICATION 26 (489 aa).

12 consecutive transmembrane segments (helical) span residues 42-62 (IWYI…ILII), 75-95 (LAAI…LLLG), 125-145 (IILF…TPIL), 157-177 (LTGT…FFFP), 190-210 (VIAI…WFFV), 217-237 (IIGT…ILFL), 271-291 (IMLC…GNLV), 300-320 (LSIC…FFAG), 342-362 (IVSI…IVIF), 385-405 (VLLA…GVAV), 416-436 (INLG…GWIF), and 442-462 (GIWA…LIII).

It belongs to the multi antimicrobial extrusion (MATE) (TC 2.A.66.1) family.

Its subcellular location is the membrane. In Arabidopsis thaliana (Mouse-ear cress), this protein is Protein DETOXIFICATION 26.